The chain runs to 168 residues: ATP synthase subunit b (168 aa).

A helical transmembrane segment spans residues Ala9–Leu29.

The protein belongs to the ATPase B chain family. In terms of assembly, F-type ATPases have 2 components, F(1) - the catalytic core - and F(0) - the membrane proton channel. F(1) has five subunits: alpha(3), beta(3), gamma(1), delta(1), epsilon(1). F(0) has three main subunits: a(1), b(2) and c(10-14). The alpha and beta chains form an alternating ring which encloses part of the gamma chain. F(1) is attached to F(0) by a central stalk formed by the gamma and epsilon chains, while a peripheral stalk is formed by the delta and b chains.

It localises to the cell membrane. Functionally, f(1)F(0) ATP synthase produces ATP from ADP in the presence of a proton or sodium gradient. F-type ATPases consist of two structural domains, F(1) containing the extramembraneous catalytic core and F(0) containing the membrane proton channel, linked together by a central stalk and a peripheral stalk. During catalysis, ATP synthesis in the catalytic domain of F(1) is coupled via a rotary mechanism of the central stalk subunits to proton translocation. Its function is as follows. Component of the F(0) channel, it forms part of the peripheral stalk, linking F(1) to F(0). This chain is ATP synthase subunit b, found in Bacillus thuringiensis (strain Al Hakam).